Here is a 156-residue protein sequence, read N- to C-terminus: Large ribosomal subunit protein uL15 (156 aa).

Residues 25–48 are disordered; the sequence is RGIGCGKGKTSGRGHKGQKARSGV. Residues 34–43 are compositionally biased toward basic residues; that stretch reads TSGRGHKGQK.

The protein belongs to the universal ribosomal protein uL15 family. As to quaternary structure, part of the 50S ribosomal subunit.

In terms of biological role, binds to the 23S rRNA. The chain is Large ribosomal subunit protein uL15 from Wolbachia pipientis wMel.